We begin with the raw amino-acid sequence, 104 residues long: Large ribosomal subunit protein bL21 (104 aa).

The protein belongs to the bacterial ribosomal protein bL21 family. Part of the 50S ribosomal subunit. Contacts protein L20.

Its function is as follows. This protein binds to 23S rRNA in the presence of protein L20. This is Large ribosomal subunit protein bL21 from Leptospira borgpetersenii serovar Hardjo-bovis (strain JB197).